Here is a 356-residue protein sequence, read N- to C-terminus: Methionine import ATP-binding protein MetN 1 (356 aa).

Residues 15–254 (IQIRALNKTY…PVQPITQELL (240 aa)) enclose the ABC transporter domain. 51–58 (GKSGAGKS) is a binding site for ATP.

This sequence belongs to the ABC transporter superfamily. Methionine importer (TC 3.A.1.24) family. In terms of assembly, the complex is composed of two ATP-binding proteins (MetN), two transmembrane proteins (MetI) and a solute-binding protein (MetQ).

It localises to the cell inner membrane. It catalyses the reaction L-methionine(out) + ATP + H2O = L-methionine(in) + ADP + phosphate + H(+). The enzyme catalyses D-methionine(out) + ATP + H2O = D-methionine(in) + ADP + phosphate + H(+). Part of the ABC transporter complex MetNIQ involved in methionine import. Responsible for energy coupling to the transport system. The chain is Methionine import ATP-binding protein MetN 1 from Acinetobacter baylyi (strain ATCC 33305 / BD413 / ADP1).